An 863-amino-acid polypeptide reads, in one-letter code: Probable beta-glucosidase A (863 aa).

The N-terminal stretch at 1–19 is a signal peptide; sequence MKLGWLEAAALTAASVASA. 3 N-linked (GlcNAc...) asparagine glycosylation sites follow: Asn-65, Asn-214, and Asn-255. Asp-283 is an active-site residue. N-linked (GlcNAc...) asparagine glycosylation is found at Asn-318, Asn-325, Asn-357, Asn-493, Asn-526, Asn-545, Asn-567, Asn-664, and Asn-715. Positions 720–754 are disordered; it reads KESSGDPNYGWDDEDYIPEGAKDGSPQDVLPSGGG.

It belongs to the glycosyl hydrolase 3 family.

Its subcellular location is the secreted. It catalyses the reaction Hydrolysis of terminal, non-reducing beta-D-glucosyl residues with release of beta-D-glucose.. It participates in glycan metabolism; cellulose degradation. Functionally, beta-glucosidases are one of a number of cellulolytic enzymes involved in the degradation of cellulosic biomass. Catalyzes the last step releasing glucose from the inhibitory cellobiose. This chain is Probable beta-glucosidase A (bglA), found in Emericella nidulans (strain FGSC A4 / ATCC 38163 / CBS 112.46 / NRRL 194 / M139) (Aspergillus nidulans).